A 231-amino-acid polypeptide reads, in one-letter code: Two-component response regulator ORR1 (231 aa).

In terms of domain architecture, Response regulatory spans 9 to 135; that stretch reads RVLLVDDSPV…DVQRLRKCSP (127 aa). Position 68 is a 4-aspartylphosphate (Asp68).

This sequence belongs to the ARR family. Type-A subfamily. Post-translationally, two-component system major event consists of a His-to-Asp phosphorelay between a sensor histidine kinase (HK) and a response regulator (RR). In plants, the His-to-Asp phosphorelay involves an additional intermediate named Histidine-containing phosphotransfer protein (HPt). This multistep phosphorelay consists of a His-Asp-His-Asp sequential transfer of a phosphate group between first a His and an Asp of the HK protein, followed by the transfer to a conserved His of the HPt protein and finally the transfer to an Asp in the receiver domain of the RR protein. Expressed in mature leaves and flowers, and at low levels in roots and shoots.

In terms of biological role, functions as a response regulator involved in His-to-Asp phosphorelay signal transduction system. Phosphorylation of the Asp residue in the receiver domain activates the ability of the protein to promote the transcription of target genes. Type-A response regulators seem to act as negative regulators of the cytokinin signaling. The chain is Two-component response regulator ORR1 from Oryza sativa subsp. indica (Rice).